A 202-amino-acid polypeptide reads, in one-letter code: Glycerol-3-phosphate acyltransferase (202 aa).

6 consecutive transmembrane segments (helical) span residues 3-23, 61-81, 87-107, 117-137, 144-164, and 167-187; these read NLIIYAFIYLLGSISFGLILT, IATIILDFAKAAIPLLILKFL, LLWSVAVLAIFGHCFSIYLLF, AGAMIVLLPLEVLTAFIVWAV, ISSLASLAALLAFIVSSFIFN, and LEIHTHAPVFIIAFIIVYKHL.

This sequence belongs to the PlsY family. As to quaternary structure, probably interacts with PlsX.

Its subcellular location is the cell inner membrane. The catalysed reaction is an acyl phosphate + sn-glycerol 3-phosphate = a 1-acyl-sn-glycero-3-phosphate + phosphate. The protein operates within lipid metabolism; phospholipid metabolism. Its function is as follows. Catalyzes the transfer of an acyl group from acyl-phosphate (acyl-PO(4)) to glycerol-3-phosphate (G3P) to form lysophosphatidic acid (LPA). This enzyme utilizes acyl-phosphate as fatty acyl donor, but not acyl-CoA or acyl-ACP. This chain is Glycerol-3-phosphate acyltransferase, found in Campylobacter jejuni subsp. doylei (strain ATCC BAA-1458 / RM4099 / 269.97).